The primary structure comprises 237 residues: Flagellar L-ring protein (237 aa).

A signal peptide spans 1–24; sequence MNRLSVPRFSVLIASLCGITLLSG. The N-palmitoyl cysteine moiety is linked to residue Cys-25. Cys-25 carries the S-diacylglycerol cysteine lipid modification.

It belongs to the FlgH family. The basal body constitutes a major portion of the flagellar organelle and consists of four rings (L,P,S, and M) mounted on a central rod.

The protein localises to the cell outer membrane. The protein resides in the bacterial flagellum basal body. In terms of biological role, assembles around the rod to form the L-ring and probably protects the motor/basal body from shearing forces during rotation. In Pseudomonas syringae pv. syringae (strain B728a), this protein is Flagellar L-ring protein.